The chain runs to 131 residues: Ribosome-binding factor A (131 aa).

The protein belongs to the RbfA family. In terms of assembly, monomer. Binds 30S ribosomal subunits, but not 50S ribosomal subunits or 70S ribosomes.

The protein resides in the cytoplasm. In terms of biological role, one of several proteins that assist in the late maturation steps of the functional core of the 30S ribosomal subunit. Associates with free 30S ribosomal subunits (but not with 30S subunits that are part of 70S ribosomes or polysomes). Required for efficient processing of 16S rRNA. May interact with the 5'-terminal helix region of 16S rRNA. This Pseudomonas fluorescens (strain SBW25) protein is Ribosome-binding factor A.